The following is a 262-amino-acid chain: MEVKAMEIFKKYLSLNIPKKILITYFLCWAGFLFSFSVGKFLLYLSSILKSNFISEPAKLAQSVGTAKFNAVSSAVSNTVGVKNAYLTYALSYIVSNFMGCLIIMFALGALAYLYKKDLEKAKTLEEKEELFKCYQKYLLILFIFTVINPLTGLIGVNLQYSDLIAVLPHGFFEFFGFATAVVVGVELSNKILPIVKREITSKKIVILIACSFIFIFIAGMLEPIDWFIYSYAKAYGIPLLAAFATGYKNLFLYLISMLFKS.

Transmembrane regions (helical) follow at residues 21–41 (ILITYFLCWAGFLFSFSVGKF), 94–114 (IVSNFMGCLIIMFALGALAYL), 139–159 (LLILFIFTVINPLTGLIGVNL), 164–184 (LIAVLPHGFFEFFGFATAVVV), 205–225 (IVILIACSFIFIFIAGMLEPI), and 240–260 (LLAAFATGYKNLFLYLISMLF).

It localises to the cell membrane. This is an uncharacterized protein from Methanocaldococcus jannaschii (strain ATCC 43067 / DSM 2661 / JAL-1 / JCM 10045 / NBRC 100440) (Methanococcus jannaschii).